The following is a 434-amino-acid chain: Chaperone SurA (434 aa).

The signal sequence occupies residues 1 to 20 (MKNWRTLILGLVICANTAFA). 2 consecutive PpiC domains span residues 171-272 (DTEL…KVND) and 282-382 (VTEV…QLVD).

Its subcellular location is the periplasm. The enzyme catalyses [protein]-peptidylproline (omega=180) = [protein]-peptidylproline (omega=0). Functionally, chaperone involved in the correct folding and assembly of outer membrane proteins. Recognizes specific patterns of aromatic residues and the orientation of their side chains, which are found more frequently in integral outer membrane proteins. May act in both early periplasmic and late outer membrane-associated steps of protein maturation. The polypeptide is Chaperone SurA (Yersinia pestis bv. Antiqua (strain Antiqua)).